A 570-amino-acid polypeptide reads, in one-letter code: Urease subunit alpha (570 aa).

The region spanning 131-570 (GGFDSHIHFI…LPLAQRYFMF (440 aa)) is the Urease domain. Histidine 136, histidine 138, and lysine 219 together coordinate Ni(2+). Residue lysine 219 is modified to N6-carboxylysine. Histidine 221 contributes to the substrate binding site. Ni(2+) is bound by residues histidine 248 and histidine 274. Histidine 322 functions as the Proton donor in the catalytic mechanism. Aspartate 362 is a binding site for Ni(2+).

This sequence belongs to the metallo-dependent hydrolases superfamily. Urease alpha subunit family. Heterotrimer of UreA (gamma), UreB (beta) and UreC (alpha) subunits. Three heterotrimers associate to form the active enzyme. The cofactor is Ni cation. In terms of processing, carboxylation allows a single lysine to coordinate two nickel ions.

The protein resides in the cytoplasm. It carries out the reaction urea + 2 H2O + H(+) = hydrogencarbonate + 2 NH4(+). It functions in the pathway nitrogen metabolism; urea degradation; CO(2) and NH(3) from urea (urease route): step 1/1. The polypeptide is Urease subunit alpha (Rhodopseudomonas palustris (strain ATCC BAA-98 / CGA009)).